We begin with the raw amino-acid sequence, 399 residues long: uncharacterized protein (399 aa).

The protein belongs to the NADH:flavin oxidoreductase/NADH oxidase family. As to quaternary structure, directly interacts with lipoylated GcvH-L (SpyM50867).

This is an uncharacterized protein from Streptococcus pyogenes serotype M5 (strain Manfredo).